A 154-amino-acid chain; its full sequence is 6,7-dimethyl-8-ribityllumazine synthase (154 aa).

5-amino-6-(D-ribitylamino)uracil is bound by residues Phe-23, 57 to 59, and 81 to 83; these read AFE and AVI. 86–87 is a (2S)-2-hydroxy-3-oxobutyl phosphate binding site; it reads ST. The active-site Proton donor is the His-89. Phe-114 is a binding site for 5-amino-6-(D-ribitylamino)uracil. Arg-128 contacts (2S)-2-hydroxy-3-oxobutyl phosphate.

Belongs to the DMRL synthase family.

It carries out the reaction (2S)-2-hydroxy-3-oxobutyl phosphate + 5-amino-6-(D-ribitylamino)uracil = 6,7-dimethyl-8-(1-D-ribityl)lumazine + phosphate + 2 H2O + H(+). The protein operates within cofactor biosynthesis; riboflavin biosynthesis; riboflavin from 2-hydroxy-3-oxobutyl phosphate and 5-amino-6-(D-ribitylamino)uracil: step 1/2. Catalyzes the formation of 6,7-dimethyl-8-ribityllumazine by condensation of 5-amino-6-(D-ribitylamino)uracil with 3,4-dihydroxy-2-butanone 4-phosphate. This is the penultimate step in the biosynthesis of riboflavin. This Syntrophotalea carbinolica (strain DSM 2380 / NBRC 103641 / GraBd1) (Pelobacter carbinolicus) protein is 6,7-dimethyl-8-ribityllumazine synthase.